A 146-amino-acid chain; its full sequence is Ribonuclease H (146 aa).

An RNase H type-1 domain is found at 1–143 (MKEIIIYTDG…CDQLARNAIK (143 aa)). Mg(2+) contacts are provided by aspartate 9, glutamate 47, aspartate 70, and aspartate 135.

It belongs to the RNase H family. Monomer. Requires Mg(2+) as cofactor.

The protein resides in the cytoplasm. The catalysed reaction is Endonucleolytic cleavage to 5'-phosphomonoester.. Functionally, endonuclease that specifically degrades the RNA of RNA-DNA hybrids. The chain is Ribonuclease H from Syntrophomonas wolfei subsp. wolfei (strain DSM 2245B / Goettingen).